Reading from the N-terminus, the 384-residue chain is N-acetyldiaminopimelate deacetylase (384 aa).

Residue D74 is part of the active site. Residue E133 is the Proton acceptor of the active site.

This sequence belongs to the peptidase M20A family. N-acetyldiaminopimelate deacetylase subfamily.

The enzyme catalyses N-acetyl-(2S,6S)-2,6-diaminopimelate + H2O = (2S,6S)-2,6-diaminopimelate + acetate. It functions in the pathway amino-acid biosynthesis; L-lysine biosynthesis via DAP pathway; LL-2,6-diaminopimelate from (S)-tetrahydrodipicolinate (acetylase route): step 3/3. Functionally, catalyzes the conversion of N-acetyl-diaminopimelate to diaminopimelate and acetate. The sequence is that of N-acetyldiaminopimelate deacetylase from Leuconostoc mesenteroides subsp. mesenteroides (strain ATCC 8293 / DSM 20343 / BCRC 11652 / CCM 1803 / JCM 6124 / NCDO 523 / NBRC 100496 / NCIMB 8023 / NCTC 12954 / NRRL B-1118 / 37Y).